A 224-amino-acid chain; its full sequence is 7-cyano-7-deazaguanine synthase (224 aa).

ATP is bound at residue 10 to 20 (LSGGLDSATVV). Zn(2+)-binding residues include cysteine 189, cysteine 199, cysteine 202, and cysteine 205.

It belongs to the QueC family. It depends on Zn(2+) as a cofactor.

It catalyses the reaction 7-carboxy-7-deazaguanine + NH4(+) + ATP = 7-cyano-7-deazaguanine + ADP + phosphate + H2O + H(+). Its pathway is purine metabolism; 7-cyano-7-deazaguanine biosynthesis. In terms of biological role, catalyzes the ATP-dependent conversion of 7-carboxy-7-deazaguanine (CDG) to 7-cyano-7-deazaguanine (preQ(0)). This Pseudomonas putida (strain ATCC 47054 / DSM 6125 / CFBP 8728 / NCIMB 11950 / KT2440) protein is 7-cyano-7-deazaguanine synthase.